Reading from the N-terminus, the 283-residue chain is Transcription factor bHLH104 (283 aa).

The interval 96–134 (VEINSGSSGGAVKEEQEHLDDDCSRKRARTGSCSRGGGT) is disordered. Residues 107-120 (VKEEQEHLDDDCSR) show a composition bias toward basic and acidic residues. Positions 130–181 (RGGGTKACRERLRREKLNERFMDLSSVLEPGRTPKTDKPAILDDAIRILNQL) constitute a bHLH domain.

In terms of assembly, homodimer. Interacts with BTS and BHLH47/PYE.

It localises to the nucleus. The protein is Transcription factor bHLH104 (BHLH104) of Arabidopsis thaliana (Mouse-ear cress).